The chain runs to 177 residues: Large ribosomal subunit protein uL6 (177 aa).

Lys-44 bears the N6-acetyllysine mark.

This sequence belongs to the universal ribosomal protein uL6 family. As to quaternary structure, part of the 50S ribosomal subunit.

In terms of biological role, this protein binds to the 23S rRNA, and is important in its secondary structure. It is located near the subunit interface in the base of the L7/L12 stalk, and near the tRNA binding site of the peptidyltransferase center. The polypeptide is Large ribosomal subunit protein uL6 (Escherichia fergusonii (strain ATCC 35469 / DSM 13698 / CCUG 18766 / IAM 14443 / JCM 21226 / LMG 7866 / NBRC 102419 / NCTC 12128 / CDC 0568-73)).